The following is a 358-amino-acid chain: 4-hydroxy-3-methylbut-2-en-1-yl diphosphate synthase (flavodoxin) (358 aa).

[4Fe-4S] cluster contacts are provided by cysteine 270, cysteine 273, cysteine 305, and glutamate 312.

This sequence belongs to the IspG family. The cofactor is [4Fe-4S] cluster.

It catalyses the reaction (2E)-4-hydroxy-3-methylbut-2-enyl diphosphate + oxidized [flavodoxin] + H2O + 2 H(+) = 2-C-methyl-D-erythritol 2,4-cyclic diphosphate + reduced [flavodoxin]. It functions in the pathway isoprenoid biosynthesis; isopentenyl diphosphate biosynthesis via DXP pathway; isopentenyl diphosphate from 1-deoxy-D-xylulose 5-phosphate: step 5/6. Functionally, converts 2C-methyl-D-erythritol 2,4-cyclodiphosphate (ME-2,4cPP) into 1-hydroxy-2-methyl-2-(E)-butenyl 4-diphosphate. The chain is 4-hydroxy-3-methylbut-2-en-1-yl diphosphate synthase (flavodoxin) from Vesicomyosocius okutanii subsp. Calyptogena okutanii (strain HA).